Reading from the N-terminus, the 157-residue chain is Transcription elongation factor GreA (157 aa).

Positions 1–75 (MSKEIILTQE…VETLINRAKV (75 aa)) form a coiled coil.

It belongs to the GreA/GreB family.

Its function is as follows. Necessary for efficient RNA polymerase transcription elongation past template-encoded arresting sites. The arresting sites in DNA have the property of trapping a certain fraction of elongating RNA polymerases that pass through, resulting in locked ternary complexes. Cleavage of the nascent transcript by cleavage factors such as GreA or GreB allows the resumption of elongation from the new 3'terminus. GreA releases sequences of 2 to 3 nucleotides. This Mycoplasma mycoides subsp. mycoides SC (strain CCUG 32753 / NCTC 10114 / PG1) protein is Transcription elongation factor GreA.